The sequence spans 419 residues: Fusaric acid cluster transcription factor FUB10 (419 aa).

Positions C16 to C47 form a DNA-binding region, zn(2)-C6 fungal-type. A disordered region spans residues S50–M92. Residues T74–S86 show a composition bias toward low complexity.

The protein localises to the nucleus. Functionally, transcription factor that regulates the expression of the gene cluster that mediates the biosynthesis of fusaric acid, a mycotoxin with low to moderate toxicity to animals and humans, but with high phytotoxic properties. The protein is Fusaric acid cluster transcription factor FUB10 of Gibberella fujikuroi (strain CBS 195.34 / IMI 58289 / NRRL A-6831) (Bakanae and foot rot disease fungus).